A 366-amino-acid chain; its full sequence is Flagellar P-ring protein (366 aa).

A signal peptide spans 1 to 24 (MWPLLLAVALSTLLPLAMPGSAGA).

The protein belongs to the FlgI family. The basal body constitutes a major portion of the flagellar organelle and consists of four rings (L,P,S, and M) mounted on a central rod.

It is found in the periplasm. The protein localises to the bacterial flagellum basal body. Assembles around the rod to form the L-ring and probably protects the motor/basal body from shearing forces during rotation. This is Flagellar P-ring protein from Nitratidesulfovibrio vulgaris (strain ATCC 29579 / DSM 644 / CCUG 34227 / NCIMB 8303 / VKM B-1760 / Hildenborough) (Desulfovibrio vulgaris).